An 82-amino-acid polypeptide reads, in one-letter code: Acyl carrier protein (82 aa).

The region spanning 4-79 (PEMEARLKQI…DALNYIEQKL (76 aa)) is the Carrier domain. Ser39 bears the O-(pantetheine 4'-phosphoryl)serine mark.

The protein belongs to the acyl carrier protein (ACP) family. Post-translationally, 4'-phosphopantetheine is transferred from CoA to a specific serine of apo-ACP by AcpS. This modification is essential for activity because fatty acids are bound in thioester linkage to the sulfhydryl of the prosthetic group.

It localises to the cytoplasm. It participates in lipid metabolism; fatty acid biosynthesis. Its function is as follows. Carrier of the growing fatty acid chain in fatty acid biosynthesis. This Roseiflexus castenholzii (strain DSM 13941 / HLO8) protein is Acyl carrier protein.